Here is a 460-residue protein sequence, read N- to C-terminus: V-type ATP synthase beta chain (460 aa).

Belongs to the ATPase alpha/beta chains family.

Functionally, produces ATP from ADP in the presence of a proton gradient across the membrane. The V-type beta chain is a regulatory subunit. The sequence is that of V-type ATP synthase beta chain from Thermotoga neapolitana (strain ATCC 49049 / DSM 4359 / NBRC 107923 / NS-E).